Here is a 77-residue protein sequence, read N- to C-terminus: NEDD8-like protein RUB1 (77 aa).

Residues 1-74 enclose the Ubiquitin-like domain; that stretch reads MIVKVKTLTG…MQLHLVLTLR (74 aa). A Glycyl lysine isopeptide (Gly-Lys) (interchain with K-? in acceptor proteins) cross-link involves residue G76. Residue N77 is a propeptide.

In terms of assembly, interacts with CDC53 and DCN1.

Functionally, ubiquitin-like protein modifier that can be covalently attached to lysine residues of target proteins. Activated by the dimeric UBA3-ULA1 E1 enzyme and conjugated by the E2 UBC12 to substrate proteins. RUB1-conjugated (neddylated) substrate proteins include the cullins CDC53, RTT101 and CUL3, and the modification enhances the ubiquitin-ligase activity of the corresponding cullin-RING-based E3 ubiquitin-protein ligase complexes (CRLs). This is NEDD8-like protein RUB1 (RUB1) from Saccharomyces cerevisiae (strain ATCC 204508 / S288c) (Baker's yeast).